The sequence spans 213 residues: Na(+)-translocating NADH-quinone reductase subunit D (213 aa).

A run of 6 helical transmembrane segments spans residues 22-42, 43-63, 77-97, 101-121, 131-151, and 183-203; these read LIAILGICSALAVTTTVTTAL, TMGFAVSFVTGCSSFVVSLLR, IIISLFVILIDQFLKAFFFTI, LSVFVGLIITNCIVMGRAESM, FLDGLGSGLGYGWVLVCISII, and LGLMVLAPSAFFLLGIMIWIV.

The protein belongs to the NqrDE/RnfAE family. In terms of assembly, composed of six subunits; NqrA, NqrB, NqrC, NqrD, NqrE and NqrF.

It localises to the cell inner membrane. The catalysed reaction is a ubiquinone + n Na(+)(in) + NADH + H(+) = a ubiquinol + n Na(+)(out) + NAD(+). In terms of biological role, NQR complex catalyzes the reduction of ubiquinone-1 to ubiquinol by two successive reactions, coupled with the transport of Na(+) ions from the cytoplasm to the periplasm. NqrA to NqrE are probably involved in the second step, the conversion of ubisemiquinone to ubiquinol. This Chlamydia trachomatis serovar L2 (strain ATCC VR-902B / DSM 19102 / 434/Bu) protein is Na(+)-translocating NADH-quinone reductase subunit D.